A 579-amino-acid polypeptide reads, in one-letter code: uncharacterized protein (579 aa).

A run of 3 helical transmembrane segments spans residues 173–193 (IAMG…GGLA), 196–216 (FVAA…MIGA), and 218–238 (YLGT…GFGA).

It belongs to the TMCO4 family.

Its subcellular location is the cytoplasm. It localises to the nucleus membrane. This is an uncharacterized protein from Schizosaccharomyces pombe (strain 972 / ATCC 24843) (Fission yeast).